An 821-amino-acid chain; its full sequence is TORTIFOLIA1-like protein 1 (821 aa).

5 HEAT repeats span residues 69–110 (PDSP…SYTD), 114–151 (SQLA…QFLK), 163–201 (SSLV…SATE), 205–242 (AAFQ…VGAI), and 245–282 (QSLE…HSSS). Position 406 is a phosphoserine (Ser406). Disordered stretches follow at residues 416 to 437 (PSRQ…NTSV) and 553 to 610 (MSIQ…RAWD). Positions 501-554 (PPLQRQLLHLERQQTHIMNMLQDFMGGSHDGMISLENRVRGLERIVEEMSREMS) form a coiled coil. Polar residues predominate over residues 579-590 (YGPSSRNTQTST).

Expressed at low levels in roots, hypocotyls, stems, flowers, siliques, cotyledons, and leaves. Particularly present in hydathodes of cotyledons and root hairs.

Its subcellular location is the cytoplasm. The protein localises to the cytoskeleton. Functionally, plant-specific microtubule-associated protein (MAP) that regulates the orientation of cortical microtubules and the direction of organ growth. This Arabidopsis thaliana (Mouse-ear cress) protein is TORTIFOLIA1-like protein 1.